Consider the following 2476-residue polypeptide: Non-reducing polyketide synthase pkdA (2476 aa).

The N-terminal acylcarrier protein transacylase domain (SAT) stretch occupies residues 22–230 (PNLNDAYLQS…VISEARLATL (209 aa)). Residue Cys142 is the Nucleophile; for transacylase activity of the active site. Catalysis depends on His261, which acts as the Proton donor/acceptor; for transacylase activity. Positions 388–805 (DESIAVVGMA…GSNASLVVTQ (418 aa)) constitute a Ketosynthase family 3 (KS3) domain. Residues Cys554, His689, and His728 each act as for beta-ketoacyl synthase activity in the active site. The segment at 919 to 1204 (FGGQRSSFVG…GSGVTNLASR (286 aa)) is malonyl-CoA:ACP transacylase (MAT). Residues 1290–1417 (QKGLWTFVGY…GRITFQTPKQ (128 aa)) are N-terminal hotdog fold. The PKS/mFAS DH domain maps to 1290-1592 (QKGLWTFVGY…FVEVSIAGMS (303 aa)). The segment at 1321-1590 (YVSAHVIAQT…LHFVEVSIAG (270 aa)) is product template (PT) domain. His1325 functions as the Proton acceptor; for dehydratase activity in the catalytic mechanism. The C-terminal hotdog fold stretch occupies residues 1445-1592 (QTIQGSRNIY…FVEVSIAGMS (148 aa)). The active-site Proton donor; for dehydratase activity is Asp1501. Residues 1626–1649 (DVSKNEKDAKAPSKKKESTSKSPG) form a disordered region. The 75-residue stretch at 1650–1724 (HDILARVRTL…SLVKCIGANM (75 aa)) folds into the Carrier domain. Ser1684 is modified (O-(pantetheine 4'-phosphoryl)serine). The disordered stretch occupies residues 1727–1766 (SDTSRTGDDSSDDLETASAESETSSGINNEDSHNIDRQQI). Residues 1742–1751 (TASAESETSS) show a composition bias toward low complexity. The tract at residues 1881-2030 (ELLRQYPEHA…DCEKTPSSHL (150 aa)) is methyltransferase (CMeT) domain. The segment at 2094–2340 (VTGATGSLGS…SWCPVDDVAA (247 aa)) is NADPH-binding domain.

Pantetheine 4'-phosphate serves as cofactor.

It catalyses the reaction propanoyl-CoA + 3 malonyl-CoA + AH2 + 2 S-adenosyl-L-methionine + H(+) = 2-ethyl-4,6-dihydroxy-3,5-dimethylbenzaldehyde + A + 2 S-adenosyl-L-homocysteine + 3 CO2 + 4 CoA + H2O. It functions in the pathway secondary metabolite biosynthesis. Non-reducing polyketide synthase that synthesizes 6-ethyl-2,4-dihydroxy-3,5-dimethylbenzaldehyde via condensation of one propanoyl-CoA starter unit with 3 malonyl-CoA units, as well as 2 methylation steps. The chain is Non-reducing polyketide synthase pkdA from Emericella nidulans (strain FGSC A4 / ATCC 38163 / CBS 112.46 / NRRL 194 / M139) (Aspergillus nidulans).